Here is a 454-residue protein sequence, read N- to C-terminus: Dihydrolipoyllysine-residue succinyltransferase component of 2-oxoglutarate dehydrogenase complex, mitochondrial (454 aa).

The N-terminal 68 residues, 1–68, are a transit peptide targeting the mitochondrion; the sequence is MLSRSRCVSR…RFFQTTAVCK (68 aa). The Lipoyl-binding domain occupies 71–145; sequence VITVQTPAFA…EGGTPLFTLR (75 aa). The residue at position 82 (serine 82) is a Phosphoserine. At lysine 111 the chain carries N6-lipoyllysine. Residues 147-227 form a disordered region; that stretch reads TGAAPAKAKP…KGLRSEHREK (81 aa). Over residues 149-163 the composition is skewed to low complexity; the sequence is AAPAKAKPAETPAPA. N6-acetyllysine is present on lysine 155. Pro residues predominate over residues 186-197; sequence PPVPSPSQPPSS. The span at 198-217 shows a compositional bias: low complexity; sequence KPVSAIKPTAAPPLAEAGAA. N6-acetyllysine occurs at positions 268, 273, 274, 278, and 308. Catalysis depends on residues histidine 425 and aspartate 429.

The protein belongs to the 2-oxoacid dehydrogenase family. In terms of assembly, the 2-oxoglutarate dehydrogenase complex is composed of OGDH (2-oxoglutarate dehydrogenase; E1), DLST (dihydrolipoamide succinyltransferase; E2), DLD (dihydrolipoamide dehydrogenase; E3) and the assembly factor KGD4. It contains multiple copies of the three enzymatic components (E1, E2 and E3). In the nucleus, the 2-oxoglutarate dehydrogenase complex associates with KAT2A. Interacts with ABHD11; this interaction maintains the functional lipoylation of the 2-oxoglutarate dehydrogenase complex. (R)-lipoate is required as a cofactor.

It is found in the mitochondrion matrix. It localises to the nucleus. The enzyme catalyses N(6)-[(R)-dihydrolipoyl]-L-lysyl-[protein] + succinyl-CoA = N(6)-[(R)-S(8)-succinyldihydrolipoyl]-L-lysyl-[protein] + CoA. Its pathway is amino-acid degradation; L-lysine degradation via saccharopine pathway; glutaryl-CoA from L-lysine: step 6/6. It participates in carbohydrate metabolism; tricarboxylic acid cycle. Functionally, dihydrolipoamide succinyltransferase (E2) component of the 2-oxoglutarate dehydrogenase complex. The 2-oxoglutarate dehydrogenase complex catalyzes the overall conversion of 2-oxoglutarate to succinyl-CoA and CO(2). The 2-oxoglutarate dehydrogenase complex is mainly active in the mitochondrion. A fraction of the 2-oxoglutarate dehydrogenase complex also localizes in the nucleus and is required for lysine succinylation of histones: associates with KAT2A on chromatin and provides succinyl-CoA to histone succinyltransferase KAT2A. The protein is Dihydrolipoyllysine-residue succinyltransferase component of 2-oxoglutarate dehydrogenase complex, mitochondrial of Mus musculus (Mouse).